Here is a 430-residue protein sequence, read N- to C-terminus: Enolase (430 aa).

Glutamine 163 is a binding site for (2R)-2-phosphoglycerate. Catalysis depends on glutamate 205, which acts as the Proton donor. Residues aspartate 242, glutamate 285, and aspartate 312 each contribute to the Mg(2+) site. The (2R)-2-phosphoglycerate site is built by lysine 337, arginine 366, serine 367, and lysine 388. The Proton acceptor role is filled by lysine 337.

This sequence belongs to the enolase family. Mg(2+) is required as a cofactor.

Its subcellular location is the cytoplasm. The protein localises to the secreted. It is found in the cell surface. It carries out the reaction (2R)-2-phosphoglycerate = phosphoenolpyruvate + H2O. The protein operates within carbohydrate degradation; glycolysis; pyruvate from D-glyceraldehyde 3-phosphate: step 4/5. In terms of biological role, catalyzes the reversible conversion of 2-phosphoglycerate (2-PG) into phosphoenolpyruvate (PEP). It is essential for the degradation of carbohydrates via glycolysis. The polypeptide is Enolase (Bifidobacterium animalis subsp. lactis (strain AD011)).